We begin with the raw amino-acid sequence, 892 residues long: DNA mismatch repair protein MutS (892 aa).

607–614 (GPNMSGKS) is a binding site for ATP.

This sequence belongs to the DNA mismatch repair MutS family.

Its function is as follows. This protein is involved in the repair of mismatches in DNA. It is possible that it carries out the mismatch recognition step. This protein has a weak ATPase activity. The chain is DNA mismatch repair protein MutS from Bacillus cereus (strain G9842).